The primary structure comprises 383 residues: MTSASITNTGNETMNLPQMRSIWLDEDEEAEKLYGLQAQQFMGSDDEENLGITFINSDKPVLSNKKNIELPPLSPNSHPSCHHRRSNSNSAKSKESSSSSSSANKTNHKKVFLKLNLLKKKLLGAQPDIRGKGISTPFDFQHISHADTRNGFQDEQLQEPSSLSTEIKDDYTSSSSKRDSKSLNKAFVTERIPANRESKLISRSHENKTSRLSVARSISVTSSNYSKNTQGNNHSINGRVVSTSTMATSIFEYSPNASPKQFKNKSHALGHRYTNSTDSSESSLDFLKNYNFPTLLEDKPILDFLPRSQRSSAYRSLLETPNSNKDSAKAFFPSRQSPLPKRRNSIATPSPQSKFSYSDSPVNHRKSFDDVLYSFNQLEPLQT.

A disordered region spans residues 63 to 106; that stretch reads SNKKNIELPPLSPNSHPSCHHRRSNSNSAKSKESSSSSSSANKT. Residues 87–105 show a composition bias toward low complexity; that stretch reads NSNSAKSKESSSSSSSANK. In terms of domain architecture, CRIB spans 134–147; the sequence is ISTPFDFQHISHAD. Positions 155 to 165 are enriched in polar residues; that stretch reads EQLQEPSSLST. A disordered region spans residues 155 to 189; that stretch reads EQLQEPSSLSTEIKDDYTSSSSKRDSKSLNKAFVT. Positions 166 to 182 are enriched in basic and acidic residues; it reads EIKDDYTSSSSKRDSKS. Residues S254, S258, S337, S345, and S367 each carry the phosphoserine modification. The segment at 319-361 is disordered; it reads ETPNSNKDSAKAFFPSRQSPLPKRRNSIATPSPQSKFSYSDSP. Residues 345–361 show a composition bias toward polar residues; sequence SIATPSPQSKFSYSDSP.

This sequence belongs to the BORG/CEP family. As to quaternary structure, interacts with GTP-bound CDC42.

The protein localises to the bud neck. The protein resides in the bud tip. It localises to the cytoplasm. It is found in the cell cortex. Its subcellular location is the cytoskeleton. In terms of biological role, required for cell size and shape control, bud site selection, bud emergence, actin cytoskeletal organization, mitotic spindle orientation/positioning, and mating projection formation in response to mating pheromone. The sequence is that of GTPase-interacting component 2 (GIC2) from Saccharomyces cerevisiae (strain ATCC 204508 / S288c) (Baker's yeast).